The chain runs to 858 residues: MQEQYNPQDIEHKVQQHWDNNKTFVVSEDPNKEKFYCLSMFPYPSGRLHMGHVRNYTIGDVVSRFQRLQGKNVLQPIGWDAFGLPAENAAVKNNTAPAPWTYENIEYMKNQLKLLGFGYDWNREFATCRPEYYRWEQEFFTKLFAKGLVYKKTSSVNWCPNDQTVLANEQVEDGCCWRCDTPVEQKEIPQWFIKITAYAQELLDDLDNLDGWPEMVKTMQRNWIGRSEGVELKFAVKGENTDLEVYTTRPDTLMGVTYVGIAAGHPLATKAAANNPALAAFIDECKNTKVAEAEIATMEKKGMATGLTAIHPLNGREVPIYIANFVLMDYGTGAVMAVPAHDQRDFEFATKYGLDIIPVIKPADGSELDVSEAAYTEKGVLFASGEFDGLDFQAAFNAIAAKLEAEGKGKKTVNFRLRDWGVSRQRYWGAPIPMVTTEDGQVHPVPADQLPVILPEDVVMDGVTSPIKADKEWAKTTFNGEPALRETDTFDTFMESSWYYARYCSPQADDILDPEKANYWLPVDQYIGGIEHACMHLLYSRFFYKLLRDAGYVKSDEPFKKLLCQGMVLADAFYYTNDKGGKEWVSPTEVKVERDGKGRIVSAVDATGRQVEHSGMIKMSKSKNNGIDPQEMVDKYGADTVRLFMMFASPADMTLEWQESGVEGANRFLRRVWKLVREHTELGQAPALDASALNADQKALRRDVHKTIAKVTDDVARRQTFNTAIAAIMELMNKLTKAPMTEAQDRAILDEALKAITLMLYPITPHICFEMWVALGQSNIDTASWPTYDEAALVEDEKLIVLQVNGKLRGKLTVAADATQQQVEALGMQDENVQKFIDGLTVRKVIYVPGKLLNIVAN.

Positions 42-52 (PYPSGRLHMGH) match the 'HIGH' region motif. Positions 618–622 (KMSKS) match the 'KMSKS' region motif. An ATP-binding site is contributed by K621.

This sequence belongs to the class-I aminoacyl-tRNA synthetase family.

The protein localises to the cytoplasm. The catalysed reaction is tRNA(Leu) + L-leucine + ATP = L-leucyl-tRNA(Leu) + AMP + diphosphate. The protein is Leucine--tRNA ligase of Vibrio cholerae serotype O1 (strain ATCC 39541 / Classical Ogawa 395 / O395).